The sequence spans 173 residues: Photosystem I assembly protein Ycf3 (173 aa).

TPR repeat units lie at residues 35–68, 72–105, and 120–153; these read AFAY…EEDP, AFIL…NAKM, and GSIA…APNN.

It belongs to the Ycf3 family.

It localises to the cellular thylakoid membrane. Its function is as follows. Essential for the assembly of the photosystem I (PSI) complex. May act as a chaperone-like factor to guide the assembly of the PSI subunits. The chain is Photosystem I assembly protein Ycf3 from Synechococcus sp. (strain RCC307).